A 397-amino-acid polypeptide reads, in one-letter code: Phosphoglycerate kinase (397 aa).

Substrate is bound by residues D21 to N23, R37, H60 to R63, R119, and R152. ATP-binding positions include K202, G294, E325, and G351–S354.

This sequence belongs to the phosphoglycerate kinase family. As to quaternary structure, monomer.

The protein localises to the cytoplasm. It carries out the reaction (2R)-3-phosphoglycerate + ATP = (2R)-3-phospho-glyceroyl phosphate + ADP. Its pathway is carbohydrate degradation; glycolysis; pyruvate from D-glyceraldehyde 3-phosphate: step 2/5. This is Phosphoglycerate kinase from Pseudothermotoga lettingae (strain ATCC BAA-301 / DSM 14385 / NBRC 107922 / TMO) (Thermotoga lettingae).